Here is a 277-residue protein sequence, read N- to C-terminus: tRNA uridine(34) hydroxylase (277 aa).

The region spanning 126–221 is the Rhodanese domain; sequence SSPDVHVIDT…YLETMRGDDS (96 aa). Cys-181 (cysteine persulfide intermediate) is an active-site residue.

The protein belongs to the TrhO family.

It carries out the reaction uridine(34) in tRNA + AH2 + O2 = 5-hydroxyuridine(34) in tRNA + A + H2O. Catalyzes oxygen-dependent 5-hydroxyuridine (ho5U) modification at position 34 in tRNAs. The protein is tRNA uridine(34) hydroxylase of Anaplasma marginale (strain St. Maries).